Here is a 280-residue protein sequence, read N- to C-terminus: L-aspartate dehydrogenase (280 aa).

Residues A134 and N202 each contribute to the NAD(+) site. H232 is a catalytic residue.

This sequence belongs to the L-aspartate dehydrogenase family.

It carries out the reaction L-aspartate + NADP(+) + H2O = oxaloacetate + NH4(+) + NADPH + H(+). The enzyme catalyses L-aspartate + NAD(+) + H2O = oxaloacetate + NH4(+) + NADH + H(+). The protein operates within cofactor biosynthesis; NAD(+) biosynthesis; iminoaspartate from L-aspartate (dehydrogenase route): step 1/1. Specifically catalyzes the NAD or NADP-dependent dehydrogenation of L-aspartate to iminoaspartate. This Bradyrhizobium diazoefficiens (strain JCM 10833 / BCRC 13528 / IAM 13628 / NBRC 14792 / USDA 110) protein is L-aspartate dehydrogenase.